A 481-amino-acid polypeptide reads, in one-letter code: ATP synthase subunit beta, chloroplastic (481 aa).

ATP is bound at residue 163–170 (GGAGVGKT).

This sequence belongs to the ATPase alpha/beta chains family. As to quaternary structure, F-type ATPases have 2 components, CF(1) - the catalytic core - and CF(0) - the membrane proton channel. CF(1) has five subunits: alpha(3), beta(3), gamma(1), delta(1), epsilon(1). CF(0) has four main subunits: a(1), b(1), b'(1) and c(9-12).

The protein resides in the plastid. The protein localises to the chloroplast thylakoid membrane. The catalysed reaction is ATP + H2O + 4 H(+)(in) = ADP + phosphate + 5 H(+)(out). Functionally, produces ATP from ADP in the presence of a proton gradient across the membrane. The catalytic sites are hosted primarily by the beta subunits. The chain is ATP synthase subunit beta, chloroplastic from Tupiella akineta (Green alga).